Here is a 192-residue protein sequence, read N- to C-terminus: Signal peptidase complex subunit 2 (192 aa).

The Cytoplasmic portion of the chain corresponds to Met-1–Arg-46. A helical membrane pass occupies residues Leu-47–Asn-69. Over Lys-70 to Phe-78 the chain is Lumenal. The chain crosses the membrane as a helical span at residues Leu-79–Tyr-98. Over Thr-99–Lys-192 the chain is Cytoplasmic.

This sequence belongs to the SPCS2 family. Component of the signal peptidase complex (SPC) composed of a catalytic subunit SEC11 and three accessory subunits SPCS1, SPCS2 and SPCS3. The complex induces a local thinning of the ER membrane which is used to measure the length of the signal peptide (SP) h-region of protein substrates. This ensures the selectivity of the complex towards h-regions shorter than 18-20 amino acids.

The protein localises to the endoplasmic reticulum membrane. In terms of biological role, component of the signal peptidase complex (SPC) which catalyzes the cleavage of N-terminal signal sequences from nascent proteins as they are translocated into the lumen of the endoplasmic reticulum. Enhances the enzymatic activity of SPC and facilitates the interactions between different components of the translocation site. This chain is Signal peptidase complex subunit 2, found in Arabidopsis thaliana (Mouse-ear cress).